The following is a 356-amino-acid chain: MRVADFSFELPESLIAHYPQPERSGCRLLSLDGPTGALTHGTFTDLLDKLNPGDLLVFNNTRVIPARLFGRKASGGKIEVLVERMLDDKRILAHIRASKAPKPGAELLLGDDESINATMVARHDALFEVEFNDARPVLDILNAIGHMPLPPYIDRPDEDADRELYQTVYSQKPGAVAAPTAGLHFDEPLLERLREKGIEMAFVTLHVGAGTFQPVRVDTIEDHIMHSEYAEVPQDVVDAVLAAKARGNRVIAVGTTSVRSLESAAQAAKKDLIEPFFGDTKIFIYPGYQYTVIDALVTNFHLPESTLIMLVSAFAGYQNTMNAYKAAVEQNYRFFSYGDAMFITYNPQALNERVGE.

The protein belongs to the QueA family. As to quaternary structure, monomer.

Its subcellular location is the cytoplasm. The catalysed reaction is 7-aminomethyl-7-carbaguanosine(34) in tRNA + S-adenosyl-L-methionine = epoxyqueuosine(34) in tRNA + adenine + L-methionine + 2 H(+). Its pathway is tRNA modification; tRNA-queuosine biosynthesis. Functionally, transfers and isomerizes the ribose moiety from AdoMet to the 7-aminomethyl group of 7-deazaguanine (preQ1-tRNA) to give epoxyqueuosine (oQ-tRNA). The protein is S-adenosylmethionine:tRNA ribosyltransferase-isomerase of Enterobacter sp. (strain 638).